Consider the following 185-residue polypeptide: Large ribosomal subunit protein uL16m (185 aa).

It belongs to the universal ribosomal protein uL16 family.

It is found in the mitochondrion. This Zea mays (Maize) protein is Large ribosomal subunit protein uL16m (RPL16).